The chain runs to 414 residues: Lipoyl synthase, mitochondrial (414 aa).

The transit peptide at 1–31 directs the protein to the mitochondrion; the sequence is MAVSTSHFRSLCASRPLSRTAIVGHISCRSY. The segment at 31–51 is disordered; that stretch reads YATTEPSPSATSTSTTTTARR. Residues 32 to 48 are compositionally biased toward low complexity; the sequence is ATTEPSPSATSTSTTTT. 7 residues coordinate [4Fe-4S] cluster: cysteine 131, cysteine 136, cysteine 142, cysteine 162, cysteine 166, cysteine 169, and serine 377. A Radical SAM core domain is found at 145–366; the sequence is GSDKSAATAT…RQRALDMGFL (222 aa).

Belongs to the radical SAM superfamily. Lipoyl synthase family. [4Fe-4S] cluster serves as cofactor.

The protein localises to the mitochondrion. The enzyme catalyses [[Fe-S] cluster scaffold protein carrying a second [4Fe-4S](2+) cluster] + N(6)-octanoyl-L-lysyl-[protein] + 2 oxidized [2Fe-2S]-[ferredoxin] + 2 S-adenosyl-L-methionine + 4 H(+) = [[Fe-S] cluster scaffold protein] + N(6)-[(R)-dihydrolipoyl]-L-lysyl-[protein] + 4 Fe(3+) + 2 hydrogen sulfide + 2 5'-deoxyadenosine + 2 L-methionine + 2 reduced [2Fe-2S]-[ferredoxin]. It functions in the pathway protein modification; protein lipoylation via endogenous pathway; protein N(6)-(lipoyl)lysine from octanoyl-[acyl-carrier-protein]: step 2/2. Catalyzes the radical-mediated insertion of two sulfur atoms into the C-6 and C-8 positions of the octanoyl moiety bound to the lipoyl domains of lipoate-dependent enzymes, thereby converting the octanoylated domains into lipoylated derivatives. In Aspergillus fumigatus (strain CBS 144.89 / FGSC A1163 / CEA10) (Neosartorya fumigata), this protein is Lipoyl synthase, mitochondrial.